Here is a 210-residue protein sequence, read N- to C-terminus: Protein-methionine-sulfoxide reductase heme-binding subunit MsrQ (210 aa).

The next 6 membrane-spanning stretches (helical) occupy residues 8–28 (LAVFLAACIAPVWWLYQAWIF), 37–57 (VLVENFGVATLVMLLITLSMT), 75–95 (LGLWCFAYALLHLSMYALFIL), 110–130 (PYIIVGALALLGLLALAVTSN), 147–167 (IIYVILGLGLLHMFWIVRADL), and 169–189 (EWALYAGIGAFLLLLRIPVFA).

Belongs to the MsrQ family. Heterodimer of a catalytic subunit (MsrP) and a heme-binding subunit (MsrQ). It depends on FMN as a cofactor. Heme b serves as cofactor.

The protein localises to the cell inner membrane. Part of the MsrPQ system that repairs oxidized periplasmic proteins containing methionine sulfoxide residues (Met-O), using respiratory chain electrons. Thus protects these proteins from oxidative-stress damage caused by reactive species of oxygen and chlorine generated by the host defense mechanisms. MsrPQ is essential for the maintenance of envelope integrity under bleach stress, rescuing a wide series of structurally unrelated periplasmic proteins from methionine oxidation. MsrQ provides electrons for reduction to the reductase catalytic subunit MsrP, using the quinone pool of the respiratory chain. In Pseudomonas syringae pv. syringae (strain B728a), this protein is Protein-methionine-sulfoxide reductase heme-binding subunit MsrQ.